Here is a 470-residue protein sequence, read N- to C-terminus: Methylenetetrahydrofolate--tRNA-(uracil-5-)-methyltransferase TrmFO (470 aa).

Position 10–15 (10–15 (GAGLAG)) interacts with FAD.

This sequence belongs to the MnmG family. TrmFO subfamily. It depends on FAD as a cofactor.

It is found in the cytoplasm. It catalyses the reaction uridine(54) in tRNA + (6R)-5,10-methylene-5,6,7,8-tetrahydrofolate + NADH + H(+) = 5-methyluridine(54) in tRNA + (6S)-5,6,7,8-tetrahydrofolate + NAD(+). It carries out the reaction uridine(54) in tRNA + (6R)-5,10-methylene-5,6,7,8-tetrahydrofolate + NADPH + H(+) = 5-methyluridine(54) in tRNA + (6S)-5,6,7,8-tetrahydrofolate + NADP(+). Catalyzes the folate-dependent formation of 5-methyl-uridine at position 54 (M-5-U54) in all tRNAs. The sequence is that of Methylenetetrahydrofolate--tRNA-(uracil-5-)-methyltransferase TrmFO from Prochlorococcus marinus (strain MIT 9301).